The primary structure comprises 426 residues: Glutamyl-tRNA reductase (426 aa).

Substrate-binding positions include 49-52, Ser-109, 114-116, and Gln-120; these read TCNR and EGQ. Cys-50 serves as the catalytic Nucleophile. 189–194 provides a ligand contact to NADP(+); that stretch reads GAGETG.

It belongs to the glutamyl-tRNA reductase family. Homodimer.

It catalyses the reaction (S)-4-amino-5-oxopentanoate + tRNA(Glu) + NADP(+) = L-glutamyl-tRNA(Glu) + NADPH + H(+). Its pathway is porphyrin-containing compound metabolism; protoporphyrin-IX biosynthesis; 5-aminolevulinate from L-glutamyl-tRNA(Glu): step 1/2. It participates in porphyrin-containing compound metabolism; chlorophyll biosynthesis. Functionally, catalyzes the NADPH-dependent reduction of glutamyl-tRNA(Glu) to glutamate 1-semialdehyde (GSA). This chain is Glutamyl-tRNA reductase, found in Prosthecochloris aestuarii (strain DSM 271 / SK 413).